The chain runs to 665 residues: Sodium/glucose cotransporter 1 (665 aa).

The Extracellular portion of the chain corresponds to 1-24 (MDSSTLSPAVTATDAPIPSYERIR). The chain crosses the membrane as a helical span at residues 25-47 (NAADISVIVIYFVVVMAVGLWAM). The Cytoplasmic portion of the chain corresponds to 48 to 66 (FSTNRGTVGGFFLAGRSMV). The helical transmembrane segment at 67 to 90 (WWPIGASLFASNIGSGHFVGLAGT) threads the bilayer. The Extracellular portion of the chain corresponds to 91-95 (GAAAG). Residues 96 to 117 (IAMGGFEWNALVLVVVLGWIFV) form a helical membrane-spanning segment. The Cytoplasmic segment spans residues 118–139 (PIYIKAGVVTMPEYLRKRFGGK). Residues 140 to 169 (RIQIYLSVLSLLLYIFTKISADIFSGAIFI) form a helical membrane-spanning segment. Residues 170–176 (NLALGLD) lie on the Extracellular side of the membrane. The helical transmembrane segment at 177 to 193 (IYLAIFILLAITALYTI) threads the bilayer. The Cytoplasmic segment spans residues 194-202 (TGGLAAVIY). The helical transmembrane segment at 203–221 (TDTLQTAIMLVGSFILTGF) threads the bilayer. At 222-275 (AFNEVGGYEAFMDKYMKAIPTKVSNGNFTAKEECYTPRADSFHIFRDPITGDMP) the chain is on the extracellular side. Residue N248 is glycosylated (N-linked (GlcNAc...) asparagine). Disulfide bonds link C255–C511, C255–C611, C345–C351, C355–C361, and C517–C522. A helical transmembrane segment spans residues 276-295 (WPGLIFGLAILALWYWCTDQ). At 296–309 (VIVQRCLSAKNMSH) the chain is on the cytoplasmic side. The chain crosses the membrane as a helical span at residues 310–331 (VKADCTLCGYLKLLPMFLMVMP). The Extracellular segment spans residues 332–375 (GMISRILYTEKIACVLPEECQKYCGTPVGCTNIAYPTLVVELMP). The chain crosses the membrane as a helical span at residues 376-406 (NGLRGLMLSVMMASLMSSLTSIFNSASTLFT). The Cytoplasmic portion of the chain corresponds to 407–422 (MDIYTKIRKKASEKEL). A helical membrane pass occupies residues 423–444 (MIAGRLFILVLIGISIAWVPIV). At 445–451 (QSAQSGQ) the chain is on the extracellular side. Residues 452 to 477 (LFDYIQSITSYLGPPIAAVFLLAIFC) traverse the membrane as a helical segment. Q457 serves as a coordination point for D-glucose. The Cytoplasmic portion of the chain corresponds to 478 to 481 (KRVN). The helical transmembrane segment at 482 to 504 (EQGAFWGLILGFLIGISRMITEF) threads the bilayer. The Extracellular segment spans residues 505–525 (AYGTGSCMEPSNCPKIICGVH). Residues 526–547 (YLYFAIILFVISVITILIISFL) form a helical membrane-spanning segment. The Cytoplasmic portion of the chain corresponds to 548 to 645 (TKPIPDVHLY…TSEKPLWRTV (98 aa)). Position 585 is a phosphoserine (S585). Position 588 is a phosphothreonine (T588). The chain crosses the membrane as a helical span at residues 646 to 663 (VNINGIILLAVAVFCHAY). The Extracellular segment spans residues 664 to 665 (FA).

It belongs to the sodium:solute symporter (SSF) (TC 2.A.21) family. N-glycosylation is not necessary for the cotransporter function. Expressed in enterocytes and enteroendocrine cells of small intestine (at protein level). Expressed in S3 segments of renal proximal tubules (at protein level). Expressed in endometrial glandular and epithelial cells (at protein level).

It is found in the apical cell membrane. It catalyses the reaction D-glucose(out) + 2 Na(+)(out) = D-glucose(in) + 2 Na(+)(in). It carries out the reaction D-galactose(out) + 2 Na(+)(out) = D-galactose(in) + 2 Na(+)(in). Enhanced by the interaction with PDZK1IP1/MAP17; but unlike SLC5A2/SGLT2, PDZK1IP1 is not essential for SLC5A1 transporter activity. Possibly modulated by cholesterol binding. In terms of biological role, electrogenic Na(+)-coupled sugar symporter that actively transports D-glucose or D-galactose at the plasma membrane, with a Na(+) to sugar coupling ratio of 2:1. Transporter activity is driven by a transmembrane Na(+) electrochemical gradient set by the Na(+)/K(+) pump. Has a primary role in the transport of dietary monosaccharides from enterocytes to blood. Responsible for the absorption of D-glucose or D-galactose across the apical brush-border membrane of enterocytes, whereas basolateral exit is provided by GLUT2. Additionally, functions as a D-glucose sensor in enteroendocrine cells, triggering the secretion of the incretins GCG and GIP that control food intake and energy homeostasis. Together with SGLT2, functions in reabsorption of D-glucose from glomerular filtrate, playing a nonredundant role in the S3 segment of the proximal tubules. Transports D-glucose into endometrial epithelial cells, controlling glycogen synthesis and nutritional support for the embryo as well as the decidual transformation of endometrium prior to conception. Acts as a water channel enabling passive water transport in response to the osmotic gradient created upon sugar and Na(+) uptake. Has high water conductivity comparable to aquaporins and therefore is expected to play an important role in transepithelial water permeability, especially in the small intestine. This is Sodium/glucose cotransporter 1 (Slc5a1) from Mus musculus (Mouse).